The sequence spans 152 residues: MVKAVAVLGSSEGVKGTIFFTQEGDGPTTVTGSVSGLKPGLHGFHVHALGDTTNGCMSTGPHYNPASKEHGAPEDENRHAGDLGNVTAGADGVANINVTDSQIPLTGPNSIIGRAVVVHADPDDLGKGGHELSKSTGNAGGRVACGIIGLQG.

The Cu cation site is built by His-45, His-47, and His-62. Residues Cys-56 and Cys-145 are joined by a disulfide bond. Zn(2+) contacts are provided by His-62, His-70, His-79, and Asp-82. A Cu cation-binding site is contributed by His-119.

Belongs to the Cu-Zn superoxide dismutase family. In terms of assembly, homodimer. Cu cation is required as a cofactor. Requires Zn(2+) as cofactor.

It is found in the cytoplasm. The enzyme catalyses 2 superoxide + 2 H(+) = H2O2 + O2. In terms of biological role, destroys radicals which are normally produced within the cells and which are toxic to biological systems. In Zea mays (Maize), this protein is Superoxide dismutase [Cu-Zn] 4A (SODCC.3).